The primary structure comprises 294 residues: ATP synthase gamma chain (294 aa).

This sequence belongs to the ATPase gamma chain family. As to quaternary structure, F-type ATPases have 2 components, CF(1) - the catalytic core - and CF(0) - the membrane proton channel. CF(1) has five subunits: alpha(3), beta(3), gamma(1), delta(1), epsilon(1). CF(0) has three main subunits: a, b and c.

The protein localises to the cell inner membrane. In terms of biological role, produces ATP from ADP in the presence of a proton gradient across the membrane. The gamma chain is believed to be important in regulating ATPase activity and the flow of protons through the CF(0) complex. The sequence is that of ATP synthase gamma chain from Rhizobium rhizogenes (strain K84 / ATCC BAA-868) (Agrobacterium radiobacter).